A 486-amino-acid chain; its full sequence is Cardiolipin synthase A (486 aa).

2 helical membrane-spanning segments follow: residues 3-23 and 38-58; these read TFYT…IAGV and MAWL…YLSF. PLD phosphodiesterase domains lie at 219 to 246 and 399 to 426; these read MDLR…VDPR and EDGL…DMRS. Active-site residues include histidine 224, lysine 226, aspartate 231, histidine 404, lysine 406, and aspartate 411.

Belongs to the phospholipase D family. Cardiolipin synthase subfamily. ClsA sub-subfamily.

The protein localises to the cell inner membrane. The catalysed reaction is 2 a 1,2-diacyl-sn-glycero-3-phospho-(1'-sn-glycerol) = a cardiolipin + glycerol. Catalyzes the reversible phosphatidyl group transfer from one phosphatidylglycerol molecule to another to form cardiolipin (CL) (diphosphatidylglycerol) and glycerol. This is Cardiolipin synthase A from Serratia proteamaculans (strain 568).